The sequence spans 294 residues: Elongation factor Ts, mitochondrial 2 (294 aa).

This sequence belongs to the EF-Ts family.

Its subcellular location is the mitochondrion. Associates with the EF-Tu.GDP complex and induces the exchange of GDP to GTP. It remains bound to the aminoacyl-tRNA.EF-Tu.GTP complex up to the GTP hydrolysis stage on the ribosome. This is Elongation factor Ts, mitochondrial 2 from Paramecium tetraurelia.